Consider the following 120-residue polypeptide: Large ribosomal subunit protein eL8 (120 aa).

It belongs to the eukaryotic ribosomal protein eL8 family. Part of the 50S ribosomal subunit. Probably part of the RNase P complex.

Its subcellular location is the cytoplasm. Functionally, multifunctional RNA-binding protein that recognizes the K-turn motif in ribosomal RNA, the RNA component of RNase P, box H/ACA, box C/D and box C'/D' sRNAs. The protein is Large ribosomal subunit protein eL8 of Methanosarcina mazei (strain ATCC BAA-159 / DSM 3647 / Goe1 / Go1 / JCM 11833 / OCM 88) (Methanosarcina frisia).